The primary structure comprises 375 residues: Succinyl-diaminopimelate desuccinylase (375 aa).

His66 lines the Zn(2+) pocket. Asp68 is a catalytic residue. Position 99 (Asp99) interacts with Zn(2+). Catalysis depends on Glu133, which acts as the Proton acceptor. The Zn(2+) site is built by Glu134, Glu162, and His348.

Belongs to the peptidase M20A family. DapE subfamily. Homodimer. The cofactor is Zn(2+). It depends on Co(2+) as a cofactor.

It carries out the reaction N-succinyl-(2S,6S)-2,6-diaminopimelate + H2O = (2S,6S)-2,6-diaminopimelate + succinate. It participates in amino-acid biosynthesis; L-lysine biosynthesis via DAP pathway; LL-2,6-diaminopimelate from (S)-tetrahydrodipicolinate (succinylase route): step 3/3. Its function is as follows. Catalyzes the hydrolysis of N-succinyl-L,L-diaminopimelic acid (SDAP), forming succinate and LL-2,6-diaminopimelate (DAP), an intermediate involved in the bacterial biosynthesis of lysine and meso-diaminopimelic acid, an essential component of bacterial cell walls. This chain is Succinyl-diaminopimelate desuccinylase, found in Yersinia enterocolitica serotype O:8 / biotype 1B (strain NCTC 13174 / 8081).